Consider the following 994-residue polypeptide: Glycine dehydrogenase (decarboxylating), mitochondrial (994 aa).

The transit peptide at 1–21 (MLKLLRNNGINKLKSNLIRNY) directs the protein to the mitochondrion. Position 742 is an N6-(pyridoxal phosphate)lysine (lysine 742).

Belongs to the GcvP family. As to quaternary structure, homodimer. The glycine cleavage system is composed of four proteins: P, T, L and H. It depends on pyridoxal 5'-phosphate as a cofactor.

It localises to the mitochondrion. The enzyme catalyses N(6)-[(R)-lipoyl]-L-lysyl-[glycine-cleavage complex H protein] + glycine + H(+) = N(6)-[(R)-S(8)-aminomethyldihydrolipoyl]-L-lysyl-[glycine-cleavage complex H protein] + CO2. Its function is as follows. The glycine cleavage system catalyzes the degradation of glycine. The P protein binds the alpha-amino group of glycine through its pyridoxal phosphate cofactor; CO(2) is released and the remaining methylamine moiety is then transferred to the lipoamide cofactor of the H protein. This is Glycine dehydrogenase (decarboxylating), mitochondrial (gcvP) from Dictyostelium discoideum (Social amoeba).